Reading from the N-terminus, the 400-residue chain is tRNA(Ile)-lysidine synthase (400 aa).

20–25 (SGGLDS) lines the ATP pocket.

Belongs to the tRNA(Ile)-lysidine synthase family.

Its subcellular location is the cytoplasm. The catalysed reaction is cytidine(34) in tRNA(Ile2) + L-lysine + ATP = lysidine(34) in tRNA(Ile2) + AMP + diphosphate + H(+). Its function is as follows. Ligates lysine onto the cytidine present at position 34 of the AUA codon-specific tRNA(Ile) that contains the anticodon CAU, in an ATP-dependent manner. Cytidine is converted to lysidine, thus changing the amino acid specificity of the tRNA from methionine to isoleucine. The chain is tRNA(Ile)-lysidine synthase from Wigglesworthia glossinidia brevipalpis.